The sequence spans 273 residues: Large ribosomal subunit protein uL2 (273 aa).

Disordered stretches follow at residues 28-53 (KPFAPLVEKNSKSGGRNNNGRITTRH) and 221-273 (RGTA…RRSK). The segment covering 39-48 (KSGGRNNNGR) has biased composition (low complexity).

It belongs to the universal ribosomal protein uL2 family. In terms of assembly, part of the 50S ribosomal subunit. Forms a bridge to the 30S subunit in the 70S ribosome.

Functionally, one of the primary rRNA binding proteins. Required for association of the 30S and 50S subunits to form the 70S ribosome, for tRNA binding and peptide bond formation. It has been suggested to have peptidyltransferase activity; this is somewhat controversial. Makes several contacts with the 16S rRNA in the 70S ribosome. The sequence is that of Large ribosomal subunit protein uL2 from Enterobacter sp. (strain 638).